Here is a 111-residue protein sequence, read N- to C-terminus: COX assembly mitochondrial protein (111 aa).

Positions 39–82 constitute a CHCH domain; that stretch reads YKKCANFVQAMADCAKANGMKVFPTCDKQRDEMKSCLLFYQTDE. 2 short sequence motifs (cx9C motif) span residues 42-52 and 64-74; these read CANFVQAMADC and CDKQRDEMKSC. 2 disulfide bridges follow: Cys-42–Cys-74 and Cys-52–Cys-64.

This sequence belongs to the CMC family.

Its subcellular location is the mitochondrion inner membrane. Its function is as follows. Required for mitochondrial cytochrome c oxidase (COX) assembly and respiration. Binds copper. May be involved in copper trafficking and distribution to mitochondrial COX and SOD1. This chain is COX assembly mitochondrial protein (CMC1), found in Saccharomyces cerevisiae (strain YJM789) (Baker's yeast).